The primary structure comprises 274 residues: Large ribosomal subunit protein uL2 (274 aa).

2 disordered regions span residues 28 to 54 (APYA…TRHI) and 223 to 265 (VAMN…KRTD). Residues 39–48 (KSGGRNNNGR) show a composition bias toward low complexity.

Belongs to the universal ribosomal protein uL2 family. As to quaternary structure, part of the 50S ribosomal subunit. Forms a bridge to the 30S subunit in the 70S ribosome.

One of the primary rRNA binding proteins. Required for association of the 30S and 50S subunits to form the 70S ribosome, for tRNA binding and peptide bond formation. It has been suggested to have peptidyltransferase activity; this is somewhat controversial. Makes several contacts with the 16S rRNA in the 70S ribosome. This is Large ribosomal subunit protein uL2 from Alteromonas mediterranea (strain DSM 17117 / CIP 110805 / LMG 28347 / Deep ecotype).